The sequence spans 320 residues: 4-diphosphocytidyl-2-C-methyl-D-erythritol kinase (320 aa).

K20 is a catalytic residue. Position 112–122 (112–122) interacts with ATP; the sequence is PVAGGMGGGSA. D154 is a catalytic residue.

Belongs to the GHMP kinase family. IspE subfamily.

The enzyme catalyses 4-CDP-2-C-methyl-D-erythritol + ATP = 4-CDP-2-C-methyl-D-erythritol 2-phosphate + ADP + H(+). The protein operates within isoprenoid biosynthesis; isopentenyl diphosphate biosynthesis via DXP pathway; isopentenyl diphosphate from 1-deoxy-D-xylulose 5-phosphate: step 3/6. In terms of biological role, catalyzes the phosphorylation of the position 2 hydroxy group of 4-diphosphocytidyl-2C-methyl-D-erythritol. This Pseudarthrobacter chlorophenolicus (strain ATCC 700700 / DSM 12829 / CIP 107037 / JCM 12360 / KCTC 9906 / NCIMB 13794 / A6) (Arthrobacter chlorophenolicus) protein is 4-diphosphocytidyl-2-C-methyl-D-erythritol kinase.